A 73-amino-acid chain; its full sequence is NAD(P)H-quinone oxidoreductase subunit L (73 aa).

2 helical membrane passes run leucine 7–phenylalanine 27 and valine 44–methionine 64.

Belongs to the complex I NdhL subunit family. As to quaternary structure, NDH-1 can be composed of about 15 different subunits; different subcomplexes with different compositions have been identified which probably have different functions.

It is found in the cellular thylakoid membrane. The enzyme catalyses a plastoquinone + NADH + (n+1) H(+)(in) = a plastoquinol + NAD(+) + n H(+)(out). It carries out the reaction a plastoquinone + NADPH + (n+1) H(+)(in) = a plastoquinol + NADP(+) + n H(+)(out). NDH-1 shuttles electrons from an unknown electron donor, via FMN and iron-sulfur (Fe-S) centers, to quinones in the respiratory and/or the photosynthetic chain. The immediate electron acceptor for the enzyme in this species is believed to be plastoquinone. Couples the redox reaction to proton translocation, and thus conserves the redox energy in a proton gradient. Cyanobacterial NDH-1 also plays a role in inorganic carbon-concentration. In Synechococcus sp. (strain JA-3-3Ab) (Cyanobacteria bacterium Yellowstone A-Prime), this protein is NAD(P)H-quinone oxidoreductase subunit L.